The primary structure comprises 303 residues: Glutamate formimidoyltransferase (303 aa).

Histidine 81 serves as the catalytic For formimidoyltransferase activity. 164–172 is a folate binding site; the sequence is GPSVVGKAG.

It belongs to the formiminotransferase family.

The protein localises to the cytoplasm. It catalyses the reaction (6S)-5-formyl-5,6,7,8-tetrahydrofolate + L-glutamate = N-formyl-L-glutamate + (6S)-5,6,7,8-tetrahydrofolate + H(+). It carries out the reaction 5-formimidoyltetrahydrofolate + L-glutamate = N-formimidoyl-L-glutamate + (6S)-5,6,7,8-tetrahydrofolate. The enzyme catalyses (6S)-5-formyl-5,6,7,8-tetrahydrofolate + ATP = (6R)-5,10-methenyltetrahydrofolate + ADP + phosphate. It participates in amino-acid degradation; L-histidine degradation into L-glutamate; L-glutamate from N-formimidoyl-L-glutamate (transferase route): step 1/1. It functions in the pathway one-carbon metabolism; tetrahydrofolate interconversion. In terms of biological role, catalyzes the transfer of the formyl group from N-formylglutamate to tetrahydrofolate (THF) to yield 5-formyltetrahydrofolate (5-CHO-THF) and glutamate (Glu). The triglutamate form of 5-CHO-THF (5-CHO-THF-Glu3) can also be used as substrate. It can also catalyze the transfer of the formimino group from N-formiminoglutamate to tetrahydrofolate (THF) to yield 5-formiminotetrahydrofolate (5-NH=CH-THF) and glutamate (Glu). It can replace YgfA to catalyze the irreversible ATP-dependent transformation of 5-CHO-THF to form 5,10-methenyltetrahydrofolate (5,10-CH=THF). This chain is Glutamate formimidoyltransferase, found in Thermoplasma acidophilum (strain ATCC 25905 / DSM 1728 / JCM 9062 / NBRC 15155 / AMRC-C165).